The primary structure comprises 252 residues: Phosphate import ATP-binding protein PstB (252 aa).

Positions leucine 5–valine 247 constitute an ABC transporter domain. Glycine 37–threonine 44 serves as a coordination point for ATP.

The protein belongs to the ABC transporter superfamily. Phosphate importer (TC 3.A.1.7) family. In terms of assembly, the complex is composed of two ATP-binding proteins (PstB), two transmembrane proteins (PstC and PstA) and a solute-binding protein (PstS).

It localises to the cell membrane. The catalysed reaction is phosphate(out) + ATP + H2O = ADP + 2 phosphate(in) + H(+). Its function is as follows. Part of the ABC transporter complex PstSACB involved in phosphate import. Responsible for energy coupling to the transport system. The chain is Phosphate import ATP-binding protein PstB from Deinococcus geothermalis (strain DSM 11300 / CIP 105573 / AG-3a).